A 202-amino-acid chain; its full sequence is Probable WRKY transcription factor 59 (202 aa).

The segment at residues 103–168 (DEKVALDDGY…YEGRHNHPSP (66 aa)) is a DNA-binding region (WRKY).

It belongs to the WRKY group II-c family.

Its subcellular location is the nucleus. Transcription factor. Interacts specifically with the W box (5'-(T)TGAC[CT]-3'), a frequently occurring elicitor-responsive cis-acting element. The protein is Probable WRKY transcription factor 59 (WRKY59) of Arabidopsis thaliana (Mouse-ear cress).